The chain runs to 439 residues: GTPase Obg (439 aa).

The Obg domain maps to 1–159 (MAFVDQAQIE…RNLKLELKVL (159 aa)). One can recognise an OBG-type G domain in the interval 160–336 (ADVGLVGFPS…LMRLTADMLA (177 aa)). GTP contacts are provided by residues 166–173 (GFPSAGKS), 191–195 (FTTLS), 213–216 (DLPG), 283–286 (TKMD), and 317–319 (SSI). Serine 173 and threonine 193 together coordinate Mg(2+). Residues 338–357 (APAPESYRPETKNDTSEKSY) are disordered. Residues 344 to 354 (YRPETKNDTSE) show a composition bias toward basic and acidic residues. In terms of domain architecture, OCT spans 358-439 (TFKPETHDFT…NSDFVFEFSE (82 aa)).

Belongs to the TRAFAC class OBG-HflX-like GTPase superfamily. OBG GTPase family. In terms of assembly, monomer. Mg(2+) serves as cofactor.

Its subcellular location is the cytoplasm. An essential GTPase which binds GTP, GDP and possibly (p)ppGpp with moderate affinity, with high nucleotide exchange rates and a fairly low GTP hydrolysis rate. Plays a role in control of the cell cycle, stress response, ribosome biogenesis and in those bacteria that undergo differentiation, in morphogenesis control. This chain is GTPase Obg, found in Leuconostoc mesenteroides subsp. mesenteroides (strain ATCC 8293 / DSM 20343 / BCRC 11652 / CCM 1803 / JCM 6124 / NCDO 523 / NBRC 100496 / NCIMB 8023 / NCTC 12954 / NRRL B-1118 / 37Y).